A 178-amino-acid polypeptide reads, in one-letter code: Large ribosomal subunit protein uL6 (178 aa).

It belongs to the universal ribosomal protein uL6 family. Part of the 50S ribosomal subunit.

This protein binds to the 23S rRNA, and is important in its secondary structure. It is located near the subunit interface in the base of the L7/L12 stalk, and near the tRNA binding site of the peptidyltransferase center. The protein is Large ribosomal subunit protein uL6 of Francisella philomiragia subsp. philomiragia (strain ATCC 25017 / CCUG 19701 / FSC 153 / O#319-036).